A 91-amino-acid chain; its full sequence is Acylphosphatase (91 aa).

The 87-residue stretch at 3-89 folds into the Acylphosphatase-like domain; sequence TLLVRISGKV…PDQPGFSQKP (87 aa). Catalysis depends on residues Arg18 and Asn36.

This sequence belongs to the acylphosphatase family.

It catalyses the reaction an acyl phosphate + H2O = a carboxylate + phosphate + H(+). The sequence is that of Acylphosphatase (acyP) from Rhodospirillum rubrum (strain ATCC 11170 / ATH 1.1.1 / DSM 467 / LMG 4362 / NCIMB 8255 / S1).